A 911-amino-acid chain; its full sequence is Desmoglein-1-gamma (911 aa).

The signal sequence occupies residues 1–23 (MDWHSFRIAALLLTSLVVLEVNS). The propeptide occupies 24 to 49 (EFQIQVRDHNAKNGTIKWHSIRRQKR). Cadherin domains lie at 50-157 (EWIK…PPVF), 158-269 (SMTT…IPYL), and 270-389 (EQSS…QPGS). The Extracellular segment spans residues 50 to 519 (EWIKFAAACR…PNVDNVHFGP (470 aa)). N110 is a glycosylation site (N-linked (GlcNAc...) (high mannose) asparagine). N180 carries N-linked (GlcNAc...) asparagine glycosylation. N401 is a glycosylation site (N-linked (GlcNAc...) asparagine). The helical transmembrane segment at 520–540 (AGIGLLIMGFLVLGLVPFLLI) threads the bilayer. The Cytoplasmic portion of the chain corresponds to 541-911 (SCDCGGAPGG…GMIGNLSIPP (371 aa)). Desmoglein repeat repeat units lie at residues 783–809 (AYPS…TVRE), 810–839 (SYTT…ERVV), 840–869 (GPIS…ERVI), and 870–897 (APGS…ERVI). One copy of the Desmoglein repeat 5; truncated repeat lies at 898-911 (QPTSGMIGNLSIPP).

In terms of assembly, interacts with DSC3; there is evidence to suggest that the interaction promotes cell-cell adhesion of keratinocytes. In terms of tissue distribution, expressed in epidermis, brain, liver, skeletal, muscle and testis.

Its subcellular location is the cell membrane. It localises to the cell junction. The protein resides in the desmosome. The protein localises to the cytoplasm. It is found in the nucleus. Its function is as follows. Component of intercellular desmosome junctions. Involved in the interaction of plaque proteins and intermediate filaments mediating cell-cell adhesion. This Mus musculus (Mouse) protein is Desmoglein-1-gamma (Dsg1c).